The following is a 292-amino-acid chain: ATP phosphoribosyltransferase (292 aa).

It belongs to the ATP phosphoribosyltransferase family. Long subfamily. Mg(2+) is required as a cofactor.

The protein resides in the cytoplasm. It carries out the reaction 1-(5-phospho-beta-D-ribosyl)-ATP + diphosphate = 5-phospho-alpha-D-ribose 1-diphosphate + ATP. Its pathway is amino-acid biosynthesis; L-histidine biosynthesis; L-histidine from 5-phospho-alpha-D-ribose 1-diphosphate: step 1/9. Its activity is regulated as follows. Feedback inhibited by histidine. Its function is as follows. Catalyzes the condensation of ATP and 5-phosphoribose 1-diphosphate to form N'-(5'-phosphoribosyl)-ATP (PR-ATP). Has a crucial role in the pathway because the rate of histidine biosynthesis seems to be controlled primarily by regulation of HisG enzymatic activity. The protein is ATP phosphoribosyltransferase of Gemmatimonas aurantiaca (strain DSM 14586 / JCM 11422 / NBRC 100505 / T-27).